The primary structure comprises 298 residues: ADP/ATP translocase 2 (298 aa).

Met-1 is subject to N-acetylmethionine. The Mitochondrial intermembrane segment spans residues 1–7; sequence MTDAAVS. Thr-2 bears the N-acetylthreonine; in ADP/ATP translocase 2, N-terminally processed mark. A Solcar 1 repeat occupies 6–98; that stretch reads VSFAKDFLAG…FAFKDKYKQI (93 aa). Ser-7 carries the phosphoserine modification. The chain crosses the membrane as a helical span at residues 8–37; it reads FAKDFLAGGVAAAISKTAVAPIERVKLLLQ. At Lys-23 the chain carries N6-malonyllysine. At 38 to 74 the chain is on the mitochondrial matrix side; that stretch reads VQHASKQITADKQYKGIIDCVVRIPKEQGVLSFWRGN. At Lys-43 the chain carries N6-succinyllysine. Lys-52 carries the N6,N6,N6-trimethyllysine; alternate modification. Residue Lys-52 is modified to N6,N6-dimethyllysine; alternate. At Lys-52 the chain carries N6-methyllysine; alternate. A helical transmembrane segment spans residues 75–99; that stretch reads LANVIRYFPTQALNFAFKDKYKQIF. ADP is bound by residues Arg-80 and Lys-92. 2 positions are modified to N6-malonyllysine: Lys-92 and Lys-96. Over 100-109 the chain is Mitochondrial intermembrane; that stretch reads LGGVDKRTQF. Residue Lys-105 is modified to N6-acetyllysine; alternate. An N6-succinyllysine; alternate modification is found at Lys-105. The chain crosses the membrane as a helical span at residues 110 to 130; sequence WRYFAGNLASGGAAGATSLCF. Solcar repeat units follow at residues 111 to 201 and 212 to 297; these read RYFA…AKGM and ISWM…IKKF. The Mitochondrial matrix portion of the chain corresponds to 131 to 178; it reads VYPLDFARTRLAADVGKAGAEREFRGLGDCLVKIYKSDGIRGLYQGFN. Residue Lys-147 is modified to N6-methyllysine; alternate. An N6-acetyllysine; alternate modification is found at Lys-147. N6-succinyllysine; alternate is present on Lys-147. At Lys-147 the chain carries N6-malonyllysine; alternate. An N6-acetyllysine mark is found at Lys-163 and Lys-166. A helical membrane pass occupies residues 179–199; the sequence is VSVQGIIIYRAAYFGIYDTAK. Topologically, residues 200–210 are mitochondrial intermembrane; that stretch reads GMLPDPKNTHI. A helical membrane pass occupies residues 211 to 231; it reads FISWMIAQSVTAVAGLTSYPF. Over 232–273 the chain is Mitochondrial matrix; the sequence is DTVRRRMMMQSGRKGTDIMYTGTLDCWRKIARDEGAKAFFKG. An ADP-binding site is contributed by Arg-235. An important for transport activity region spans residues 235–240; that stretch reads RRRMMM. A Nucleotide carrier signature motif motif is present at residues 235 to 240; that stretch reads RRRMMM. Lys-268 bears the N6-acetyllysine; alternate mark. The residue at position 268 (Lys-268) is an N6-succinyllysine; alternate. Residues 274 to 291 form a helical membrane-spanning segment; that stretch reads AWSNVLRGMGGAFVLVLY. The Mitochondrial intermembrane segment spans residues 292–298; the sequence is DEIKKFT.

The protein belongs to the mitochondrial carrier (TC 2.A.29) family. As to quaternary structure, monomer. Component of the MMXD complex, which includes CIAO1, ERCC2, CIAO2B, MMS19 and SLC25A5/ANT2. Interacts with AK4. Interacts with TIMM44; leading to inhibit the presequence translocase TIMM23, thereby promoting stabilization of PINK1. Post-translationally, trimethylated by ANTKMT at Lys-52.

Its subcellular location is the mitochondrion inner membrane. It is found in the membrane. The enzyme catalyses ADP(in) + ATP(out) = ADP(out) + ATP(in). It carries out the reaction H(+)(in) = H(+)(out). Its activity is regulated as follows. The matrix-open state (m-state) is inhibited by the membrane-permeable bongkrekic acid (BKA). The cytoplasmic-open state (c-state) is inhibited by the membrane-impermeable toxic inhibitor carboxyatractyloside (CATR). Proton transporter activity is inhibited by ADP:ATP antiporter activity. Its function is as follows. ADP:ATP antiporter that mediates import of ADP into the mitochondrial matrix for ATP synthesis, and export of ATP out to fuel the cell. Cycles between the cytoplasmic-open state (c-state) and the matrix-open state (m-state): operates by the alternating access mechanism with a single substrate-binding site intermittently exposed to either the cytosolic (c-state) or matrix (m-state) side of the inner mitochondrial membrane. In addition to its ADP:ATP antiporter activity, also involved in mitochondrial uncoupling and mitochondrial permeability transition pore (mPTP) activity. Plays a role in mitochondrial uncoupling by acting as a proton transporter: proton transport uncouples the proton flows via the electron transport chain and ATP synthase to reduce the efficiency of ATP production and cause mitochondrial thermogenesis. Proton transporter activity is inhibited by ADP:ATP antiporter activity, suggesting that SLC25A5/ANT2 acts as a master regulator of mitochondrial energy output by maintaining a delicate balance between ATP production (ADP:ATP antiporter activity) and thermogenesis (proton transporter activity). Proton transporter activity requires free fatty acids as cofactor, but does not transport it. Probably mediates mitochondrial uncoupling in tissues that do not express UCP1. Also plays a key role in mPTP opening, a non-specific pore that enables free passage of the mitochondrial membranes to solutes of up to 1.5 kDa, and which contributes to cell death. It is however unclear if SLC25A5/ANT2 constitutes a pore-forming component of mPTP or regulates it. Acts as a regulator of mitophagy independently of ADP:ATP antiporter activity: promotes mitophagy via interaction with TIMM44, leading to inhibit the presequence translocase TIMM23, thereby promoting stabilization of PINK1. As part of the mitotic spindle-associated MMXD complex it may play a role in chromosome segregation. This is ADP/ATP translocase 2 from Bos taurus (Bovine).